A 303-amino-acid polypeptide reads, in one-letter code: Uridine diphosphate glucose pyrophosphatase NUDT22 (303 aa).

Substrate-binding residues include phenylalanine 56, tyrosine 87, arginine 139, alanine 144, aspartate 151, histidine 156, and glutamate 158. One can recognise a Nudix hydrolase domain in the interval 118-285 (ADPLGVGAAL…KGAIILYNRV (168 aa)). A disordered region spans residues 148–168 (GLVDVPGGHPEPQALCPGGSP). Residues 175 to 196 (GQLVVHELFSSVLQEICDEVNL) carry the Nudix box motif. Mg(2+) contacts are provided by glutamate 189 and glutamate 193. Serine 274 serves as a coordination point for substrate.

This sequence belongs to the Nudix hydrolase family. Requires Mg(2+) as cofactor.

The enzyme catalyses UDP-sugar + H2O = UMP + alpha-D-aldose 1-phosphate.. In terms of biological role, hydrolyzes UDP-glucose to glucose 1-phosphate and UMP and UDP-galactose to galactose 1-phosphate and UMP. Preferred substrate is UDP-glucose. This chain is Uridine diphosphate glucose pyrophosphatase NUDT22 (NUDT22), found in Homo sapiens (Human).